We begin with the raw amino-acid sequence, 634 residues long: Chaperone protein HtpG (634 aa).

Positions 1-343 are a; substrate-binding; the sequence is MTEAENRVTL…SDSLPLNVSR (343 aa). Residues 344 to 560 are b; the sequence is EILQENKQLE…SYGMSRTMER (217 aa). Positions 561 to 634 are c; it reads IMKSAGQNIP…KLNGLLQSLL (74 aa).

This sequence belongs to the heat shock protein 90 family. As to quaternary structure, homodimer.

The protein localises to the cytoplasm. Its function is as follows. Molecular chaperone. Has ATPase activity. The polypeptide is Chaperone protein HtpG (Methylococcus capsulatus (strain ATCC 33009 / NCIMB 11132 / Bath)).